We begin with the raw amino-acid sequence, 193 residues long: Ancillary SecYEG translocon subunit (193 aa).

At 1-8 the chain is on the cytoplasmic side; the sequence is MLNISKKN. Residues 9-29 form a helical membrane-spanning segment; the sequence is IIFFILFFLIISLILFNWKYF. Topologically, residues 30–193 are periplasmic; it reads SLVNKENLES…MKLNELKEQN (164 aa).

This sequence belongs to the YfgM family. In terms of assembly, interacts with the SecYEG translocon. Forms a complex with PpiD.

It localises to the cell inner membrane. Its function is as follows. May mediate protein transfer from the SecYEG translocon to the periplasmic chaperone network via its periplasmic C-terminal region. This chain is Ancillary SecYEG translocon subunit, found in Buchnera aphidicola subsp. Acyrthosiphon pisum (strain APS) (Acyrthosiphon pisum symbiotic bacterium).